A 695-amino-acid chain; its full sequence is Probable serine/threonine-protein kinase abkD (695 aa).

A compositionally biased stretch (polar residues) spans T105–K119. Positions T105–L149 are disordered. The stretch at S118–R150 forms a coiled coil. Positions Q120–Q139 are enriched in low complexity. The helical transmembrane segment at T177–E193 threads the bilayer. In terms of domain architecture, Protein kinase spans D317–G695. Residues I323–V331 and K345 each bind ATP. The Proton acceptor role is filled by D477.

This sequence belongs to the protein kinase superfamily. ADCK protein kinase family.

It localises to the membrane. The polypeptide is Probable serine/threonine-protein kinase abkD (abkD) (Dictyostelium discoideum (Social amoeba)).